Here is a 212-residue protein sequence, read N- to C-terminus: Ribosomal RNA small subunit methyltransferase G (212 aa).

S-adenosyl-L-methionine-binding positions include glycine 80, leucine 85, 131 to 132 (AE), and arginine 146.

Belongs to the methyltransferase superfamily. RNA methyltransferase RsmG family.

The protein localises to the cytoplasm. The enzyme catalyses guanosine(527) in 16S rRNA + S-adenosyl-L-methionine = N(7)-methylguanosine(527) in 16S rRNA + S-adenosyl-L-homocysteine. Functionally, specifically methylates the N7 position of guanine in position 527 of 16S rRNA. This chain is Ribosomal RNA small subunit methyltransferase G, found in Xylella fastidiosa (strain M23).